We begin with the raw amino-acid sequence, 114 residues long: DNA-directed RNA polymerase subunit Rpo4 (114 aa).

The protein belongs to the eukaryotic RPB4 RNA polymerase subunit family. Part of the 13-subunit RNA polymerase complex. Forms a stalk with Rpo7 that extends from the main structure. Post-translationally, in purified enzyme appears as 5 forms, each differing by about 200 Da of a covalently bound, negatively charged residue. Not glycosylated.

The protein resides in the cytoplasm. The catalysed reaction is RNA(n) + a ribonucleoside 5'-triphosphate = RNA(n+1) + diphosphate. DNA-dependent RNA polymerase catalyzes the transcription of DNA into RNA using the four ribonucleoside triphosphates as substrates. This subunit is less well bound than the others. Probably not involved in transcription initiation. This is DNA-directed RNA polymerase subunit Rpo4 from Sulfolobus acidocaldarius (strain ATCC 33909 / DSM 639 / JCM 8929 / NBRC 15157 / NCIMB 11770).